Consider the following 70-residue polypeptide: U2-agatoxin-Ao1d (70 aa).

Residues 1-20 (MRAIIYLLLISAMVFSMTKA) form the signal peptide. Positions 21–34 (VPEEEGLQLSEDER) are excised as a propeptide. Intrachain disulfides connect Cys-37/Cys-53, Cys-44/Cys-58, and Cys-52/Cys-68. Position 69 is a leucine amide (Leu-69).

Belongs to the neurotoxin 01 (U2-agtx) family. Expressed by the venom gland.

It localises to the secreted. Its function is as follows. Insect active toxin causing rapid but reversible paralysis in crickets. No activity shown in mammals. Does not show effect on mammalian voltage-gated calcium channels. The sequence is that of U2-agatoxin-Ao1d from Agelena orientalis (Funnel-web spider).